We begin with the raw amino-acid sequence, 189 residues long: Protein GrpE (189 aa).

The tract at residues 1-24 (MADEQTVDTQNPEANQAPEASGDD) is disordered.

It belongs to the GrpE family. As to quaternary structure, homodimer.

It localises to the cytoplasm. Functionally, participates actively in the response to hyperosmotic and heat shock by preventing the aggregation of stress-denatured proteins, in association with DnaK and GrpE. It is the nucleotide exchange factor for DnaK and may function as a thermosensor. Unfolded proteins bind initially to DnaJ; upon interaction with the DnaJ-bound protein, DnaK hydrolyzes its bound ATP, resulting in the formation of a stable complex. GrpE releases ADP from DnaK; ATP binding to DnaK triggers the release of the substrate protein, thus completing the reaction cycle. Several rounds of ATP-dependent interactions between DnaJ, DnaK and GrpE are required for fully efficient folding. The polypeptide is Protein GrpE (Pseudomonas fluorescens (strain Pf0-1)).